The sequence spans 602 residues: Aspartate--tRNA(Asp/Asn) ligase (602 aa).

E176 is an L-aspartate binding site. Residues Q200–K203 are aspartate. L-aspartate contacts are provided by R222 and H452. R222–E224 contributes to the ATP binding site. E490 is a binding site for ATP. An L-aspartate-binding site is contributed by R497. Position 542–545 (G542–R545) interacts with ATP.

The protein belongs to the class-II aminoacyl-tRNA synthetase family. Type 1 subfamily. Homodimer.

Its subcellular location is the cytoplasm. The enzyme catalyses tRNA(Asx) + L-aspartate + ATP = L-aspartyl-tRNA(Asx) + AMP + diphosphate. Aspartyl-tRNA synthetase with relaxed tRNA specificity since it is able to aspartylate not only its cognate tRNA(Asp) but also tRNA(Asn). Reaction proceeds in two steps: L-aspartate is first activated by ATP to form Asp-AMP and then transferred to the acceptor end of tRNA(Asp/Asn). In Rickettsia bellii (strain OSU 85-389), this protein is Aspartate--tRNA(Asp/Asn) ligase.